We begin with the raw amino-acid sequence, 409 residues long: Arginine deiminase (409 aa).

C399 acts as the Amidino-cysteine intermediate in catalysis.

The protein belongs to the arginine deiminase family.

The protein resides in the cytoplasm. It carries out the reaction L-arginine + H2O = L-citrulline + NH4(+). It participates in amino-acid degradation; L-arginine degradation via ADI pathway; carbamoyl phosphate from L-arginine: step 1/2. This is Arginine deiminase from Streptococcus pneumoniae (strain P1031).